We begin with the raw amino-acid sequence, 341 residues long: MSLMCYNKGCGQRFDLEKNSDDACTYHPGVPVFHDALKGWSCCKRRTTDFSDFLSIAGCTKGPHNQEKPAEPVKPEVKSSLDKNDVKPKYDEFIIQAPKPLESIQRPSPDEPFSILQSKISPSLKQALEKLKLTEENAHEIKEEDSDEIKIGTSCKNGGCCKTFAGQASDDETCLYHAGVPIFHEGMKYWSCCKRKTSDFNTFLSQEGCTRGKHQWKKKDAGKKVVPCRFDWHQTGSQVIISIYAKNSVPELSLVEGNSTVLKIHIIFEGEKEFEKQISLWGVIDPSKSLVNMMATKIEIVLKKAEPMSWARLDLPPVAPPKEKEKEKDVDSEDECDDDED.

Residues cysteine 5, cysteine 10, cysteine 24, histidine 27, cysteine 42, cysteine 43, cysteine 59, histidine 64, cysteine 155, cysteine 160, cysteine 174, histidine 177, cysteine 192, cysteine 193, cysteine 209, and histidine 214 each contribute to the Zn(2+) site. CHORD domains follow at residues 5–64 (CYNK…KGPH) and 155–214 (CKNG…RGKH). The interval 61 to 81 (KGPHNQEKPAEPVKPEVKSSL) is disordered. Over residues 64–81 (HNQEKPAEPVKPEVKSSL) the composition is skewed to basic and acidic residues. One can recognise a CS domain in the interval 225–314 (VVPCRFDWHQ…AEPMSWARLD (90 aa)). The interval 313–341 (LDLPPVAPPKEKEKEKDVDSEDECDDDED) is disordered. Residues 330–341 (VDSEDECDDDED) are compositionally biased toward acidic residues.

Its function is as follows. Regulates centrosome duplication. The polypeptide is Cysteine and histidine-rich domain-containing protein 1 (chordc1) (Danio rerio (Zebrafish)).